A 117-amino-acid polypeptide reads, in one-letter code: Photosystem II reaction center Psb28 protein (117 aa).

This sequence belongs to the Psb28 family. In terms of assembly, part of the photosystem II complex.

The protein localises to the cellular thylakoid membrane. In Prochlorococcus marinus (strain MIT 9301), this protein is Photosystem II reaction center Psb28 protein.